A 225-amino-acid chain; its full sequence is PKHD-type hydroxylase YbiX (225 aa).

One can recognise a Fe2OG dioxygenase domain in the interval 78–177 (TLSTPLFNRY…RVASFMWIQS (100 aa)). 3 residues coordinate Fe cation: histidine 96, aspartate 98, and histidine 158. Arginine 168 provides a ligand contact to 2-oxoglutarate.

Requires Fe(2+) as cofactor. L-ascorbate serves as cofactor.

The sequence is that of PKHD-type hydroxylase YbiX from Escherichia coli O6:K15:H31 (strain 536 / UPEC).